The chain runs to 157 residues: Endoribonuclease YbeY (157 aa).

Positions 111, 115, and 121 each coordinate Zn(2+).

It belongs to the endoribonuclease YbeY family. Zn(2+) is required as a cofactor.

The protein resides in the cytoplasm. In terms of biological role, single strand-specific metallo-endoribonuclease involved in late-stage 70S ribosome quality control and in maturation of the 3' terminus of the 16S rRNA. The sequence is that of Endoribonuclease YbeY from Pseudomonas putida (strain ATCC 47054 / DSM 6125 / CFBP 8728 / NCIMB 11950 / KT2440).